The following is a 494-amino-acid chain: E3 ubiquitin-protein ligase ari-1.1 (494 aa).

Residues 1-30 (MSSDDEINMDDSDSSQGEIDDGCMSDDDGI) are compositionally biased toward acidic residues. The tract at residues 1–52 (MSSDDEINMDDSDSSQGEIDDGCMSDDDGIVLESREQNSSDYKDNGEPDNEV) is disordered. The segment covering 33–52 (ESREQNSSDYKDNGEPDNEV) has biased composition (basic and acidic residues). A TRIAD supradomain region spans residues 124–331 (GDAECDICCS…SSWYSCNRFD (208 aa)). Zn(2+) is bound by residues Cys128, Cys131, Cys142, His144, Cys147, Cys150, Cys169, Cys174, Cys214, Cys219, Cys235, Cys237, Cys242, Cys245, His250, Cys255, Cys282, and Cys285. Residues 128–174 (CDICCSLGELSGLSCNHRACTQCWKAYLTNKIANNAQSEIECMAPNC) form an RING-type 1 zinc finger. The IBR-type zinc finger occupies 194 to 255 (ATYRKLIVAS…GHDWHEPVNC (62 aa)). Residues 282-313 (CPKCMITIEKDGGCNHMTCKNTACRFEFCWMC) form an RING-type 2; atypical zinc finger. Cys295 is a catalytic residue. The Zn(2+) site is built by Cys300, Cys305, Cys310, Cys313, His320, and Cys327. Residues 346-494 (RANLQRYLFY…ADQELWVFNE (149 aa)) are ariadne domain.

This sequence belongs to the RBR family. Ariadne subfamily. In terms of assembly, interacts with ubiquitin-conjugating enzyme E2 ubc-18.

The protein localises to the nucleus. It localises to the cytoplasm. It catalyses the reaction [E2 ubiquitin-conjugating enzyme]-S-ubiquitinyl-L-cysteine + [acceptor protein]-L-lysine = [E2 ubiquitin-conjugating enzyme]-L-cysteine + [acceptor protein]-N(6)-ubiquitinyl-L-lysine.. Autoinhibited by the ariadne domain, which masks the second RING-type zinc finger that contains the active site and inhibits the E3 activity. In terms of biological role, E3 ubiquitin-protein transferase, which catalyzes ubiquitination of target proteins together with ubiquitin-conjugating enzyme E2 ubc-18. Acts with ubc-18 to regulate pharyngeal development. This Caenorhabditis elegans protein is E3 ubiquitin-protein ligase ari-1.1.